Here is a 48-residue protein sequence, read N- to C-terminus: Large ribosomal subunit protein bL33A (48 aa).

It belongs to the bacterial ribosomal protein bL33 family.

This Streptococcus pyogenes serotype M28 (strain MGAS6180) protein is Large ribosomal subunit protein bL33A.